The chain runs to 348 residues: Probable dual-specificity RNA methyltransferase RlmN (348 aa).

Glu93 functions as the Proton acceptor in the catalytic mechanism. The 225-residue stretch at Thr99 to Asn323 folds into the Radical SAM core domain. Cysteines 106 and 338 form a disulfide. Residues Cys113, Cys117, and Cys120 each contribute to the [4Fe-4S] cluster site. Residues Gly160–Glu161, Ser190, Ser219–His221, and Asn295 contribute to the S-adenosyl-L-methionine site. The active-site S-methylcysteine intermediate is the Cys338.

This sequence belongs to the radical SAM superfamily. RlmN family. Requires [4Fe-4S] cluster as cofactor.

The protein resides in the cytoplasm. The catalysed reaction is adenosine(2503) in 23S rRNA + 2 reduced [2Fe-2S]-[ferredoxin] + 2 S-adenosyl-L-methionine = 2-methyladenosine(2503) in 23S rRNA + 5'-deoxyadenosine + L-methionine + 2 oxidized [2Fe-2S]-[ferredoxin] + S-adenosyl-L-homocysteine. The enzyme catalyses adenosine(37) in tRNA + 2 reduced [2Fe-2S]-[ferredoxin] + 2 S-adenosyl-L-methionine = 2-methyladenosine(37) in tRNA + 5'-deoxyadenosine + L-methionine + 2 oxidized [2Fe-2S]-[ferredoxin] + S-adenosyl-L-homocysteine. Functionally, specifically methylates position 2 of adenine 2503 in 23S rRNA and position 2 of adenine 37 in tRNAs. This chain is Probable dual-specificity RNA methyltransferase RlmN, found in Prochlorococcus marinus subsp. pastoris (strain CCMP1986 / NIES-2087 / MED4).